The chain runs to 267 residues: 3-deoxy-manno-octulosonate cytidylyltransferase (267 aa).

It belongs to the KdsB family.

Its subcellular location is the cytoplasm. The enzyme catalyses 3-deoxy-alpha-D-manno-oct-2-ulosonate + CTP = CMP-3-deoxy-beta-D-manno-octulosonate + diphosphate. It participates in nucleotide-sugar biosynthesis; CMP-3-deoxy-D-manno-octulosonate biosynthesis; CMP-3-deoxy-D-manno-octulosonate from 3-deoxy-D-manno-octulosonate and CTP: step 1/1. It functions in the pathway bacterial outer membrane biogenesis; lipopolysaccharide biosynthesis. Functionally, activates KDO (a required 8-carbon sugar) for incorporation into bacterial lipopolysaccharide in Gram-negative bacteria. This chain is 3-deoxy-manno-octulosonate cytidylyltransferase, found in Paraburkholderia phymatum (strain DSM 17167 / CIP 108236 / LMG 21445 / STM815) (Burkholderia phymatum).